The following is a 117-amino-acid chain: Antitoxin RelB3 (117 aa).

Antitoxin component of a type II toxin-antitoxin (TA) system. Neutralizes the effect of cognate toxin RelE3, but no other RelE or ParE toxin. In Caulobacter vibrioides (strain ATCC 19089 / CIP 103742 / CB 15) (Caulobacter crescentus), this protein is Antitoxin RelB3 (relB3).